The primary structure comprises 141 residues: uncharacterized protein (141 aa).

The disordered stretch occupies residues 1 to 61; the sequence is IRLLHSLTPP…PPPPPPPRRA (61 aa). The segment covering 8–58 has biased composition (pro residues); that stretch reads TPPPPPPPPPPPPPPPPPPPPPPPPPPPPPPPPPPPPPPPPPPPPPPPPPP. The segment at residues 98-116 is a DNA-binding region (H-T-H motif); that stretch reads KRLLVAYPVRHFLSAACQF.

This is an uncharacterized protein from Owenia fusiformis (Polychaete worm).